The sequence spans 224 residues: Ribosome maturation factor RimP (224 aa).

The tract at residues 194-224 is disordered; the sequence is REGRIPGDDLGSEEAGEQSDETASGEAEDKE. Residues 203–213 show a composition bias toward acidic residues; that stretch reads LGSEEAGEQSD.

The protein belongs to the RimP family.

The protein resides in the cytoplasm. Functionally, required for maturation of 30S ribosomal subunits. In Brucella anthropi (strain ATCC 49188 / DSM 6882 / CCUG 24695 / JCM 21032 / LMG 3331 / NBRC 15819 / NCTC 12168 / Alc 37) (Ochrobactrum anthropi), this protein is Ribosome maturation factor RimP.